The chain runs to 382 residues: Intermediate transcription factor 3 large subunit (382 aa).

The protein belongs to the poxviruses A23 family. As to quaternary structure, heterodimer of a 45 kDa and a 32 kDa subunit.

In terms of biological role, acts with RNA polymerase to initiate transcription from intermediate gene promoters. The chain is Intermediate transcription factor 3 large subunit (VITF3L) from Ectromelia virus (strain Moscow) (ECTV).